The chain runs to 51 residues: Perinerin (51 aa).

In terms of biological role, antibacterial activity against both Gram-negative and Gram-positive bacteria. Shows marked activity against P.aeruginosa, B.megaterium, A.viridans, moderate activity against E.coli K-12, S.aureus and M.luteus, and minor activity against P.vulgaris. Antifungal activity against P.heliothis. The protein is Perinerin of Perinereis aibuhitensis (Korean lugworm).